The chain runs to 200 residues: MASTVSNTSKLEKPVSLIWGCELNEQDKTFEFKVEDDEEKCEHQLALRTVCLGDKAKDEFNIVEIVTQEEGAEKSVPIATLKPSILPMATMVGIELTPPVTFRLKAGSGPLYISGQHVAMEEDYSWAEEEDEGEAEGEEEEEEEEDQESPPKAVKRPAATKKAGQAKKKKLDKEDESSEEDSPTKKGKGAGRGRKPAAKK.

At alanine 2 the chain carries N-acetylalanine. Serine 3 is modified (phosphoserine). Threonine 4 bears the Phosphothreonine mark. Residue serine 6 is modified to Phosphoserine. The residue at position 8 (threonine 8) is a Phosphothreonine. Residues 35–39 (EDDEE) are acidic tract A1. A compositionally biased stretch (acidic residues) spans 123–148 (DYSWAEEEDEGEAEGEEEEEEEEDQE). Residues 123-200 (DYSWAEEEDE…GRGRKPAAKK (78 aa)) are disordered. The acidic tract A2 stretch occupies residues 128–148 (EEEDEGEAEGEEEEEEEEDQE). Serine 149 is modified (phosphoserine). The segment covering 153 to 170 (AVKRPAATKKAGQAKKKK) has biased composition (basic residues). A Bipartite nuclear localization signal motif is present at residues 155–170 (KRPAATKKAGQAKKKK). The segment at 174-176 (EDE) is acidic tract A3. Serine 177, serine 178, and serine 182 each carry phosphoserine. Residues 185–200 (KKGKGAGRGRKPAAKK) are compositionally biased toward basic residues. The residue at position 192 (arginine 192) is an Omega-N-methylarginine; by PRMT5; alternate. Arginine 192 carries the post-translational modification Symmetric dimethylarginine; by PRMT5; alternate.

Belongs to the nucleoplasmin family. As to quaternary structure, homopentamer, when bound to H2A-H2B dimers only. Homodecamer of two stacked pentamers, when bound to H2A-H2B dimers and H3-H4 tetramers simultaneously. Interacts with the heterotetramer formed by wdr77 and prmt5. Activated by phosphorylation of multiple serine/threonine residues, along both core and tail domains. The level of phosphorylation gradually increases during egg maturation, reaching an average of 7-10 phosphates per monomer, so that at the time of fertilization the activity of the protein is maximum. In terms of processing, methylated by prmt5, yielding both monomethylated and symmetrically dimethylated Arg-192.

The protein resides in the nucleus. Its function is as follows. Acts as a chaperone for histones, such as histone H2A-H2B, and thus regulates the assembly of nucleosome cores. Involved in chromatin remodeling, especially during fertilization and early embryonic development. May be involved in sperm chromatin decondensation during fertilization. This chain is Nucleoplasmin, found in Xenopus laevis (African clawed frog).